The sequence spans 196 residues: ATP-dependent Clp protease proteolytic subunit (196 aa).

Ser101 serves as the catalytic Nucleophile. Residue His126 is part of the active site.

This sequence belongs to the peptidase S14 family. As to quaternary structure, component of the chloroplastic Clp protease core complex.

It is found in the plastid. Its subcellular location is the chloroplast stroma. It carries out the reaction Hydrolysis of proteins to small peptides in the presence of ATP and magnesium. alpha-casein is the usual test substrate. In the absence of ATP, only oligopeptides shorter than five residues are hydrolyzed (such as succinyl-Leu-Tyr-|-NHMec, and Leu-Tyr-Leu-|-Tyr-Trp, in which cleavage of the -Tyr-|-Leu- and -Tyr-|-Trp bonds also occurs).. Cleaves peptides in various proteins in a process that requires ATP hydrolysis. Has a chymotrypsin-like activity. Plays a major role in the degradation of misfolded proteins. The protein is ATP-dependent Clp protease proteolytic subunit of Gossypium barbadense (Sea Island cotton).